We begin with the raw amino-acid sequence, 343 residues long: UPF0324 membrane protein LJ_1117 (343 aa).

Transmembrane regions (helical) follow at residues Phe10 to Leu27, Tyr32 to Val54, Ile64 to Thr86, Ala91 to Leu113, Leu123 to Gln145, Asn157 to Ile179, Ala219 to Tyr241, Ile262 to Val284, Gly288 to Phe310, and Gly317 to Ser339.

This sequence belongs to the UPF0324 family.

The protein resides in the cell membrane. This is UPF0324 membrane protein LJ_1117 from Lactobacillus johnsonii (strain CNCM I-12250 / La1 / NCC 533).